We begin with the raw amino-acid sequence, 342 residues long: N-acetyl-gamma-glutamyl-phosphate reductase (342 aa).

The active site involves C146.

The protein belongs to the NAGSA dehydrogenase family. Type 1 subfamily.

The protein localises to the cytoplasm. It carries out the reaction N-acetyl-L-glutamate 5-semialdehyde + phosphate + NADP(+) = N-acetyl-L-glutamyl 5-phosphate + NADPH + H(+). It functions in the pathway amino-acid biosynthesis; L-arginine biosynthesis; N(2)-acetyl-L-ornithine from L-glutamate: step 3/4. Catalyzes the NADPH-dependent reduction of N-acetyl-5-glutamyl phosphate to yield N-acetyl-L-glutamate 5-semialdehyde. The sequence is that of N-acetyl-gamma-glutamyl-phosphate reductase from Thermobifida fusca (strain YX).